A 371-amino-acid polypeptide reads, in one-letter code: Peptide chain release factor 2 (371 aa).

N5-methylglutamine is present on Gln251.

Belongs to the prokaryotic/mitochondrial release factor family. Post-translationally, methylated by PrmC. Methylation increases the termination efficiency of RF2.

The protein localises to the cytoplasm. In terms of biological role, peptide chain release factor 2 directs the termination of translation in response to the peptide chain termination codons UGA and UAA. This chain is Peptide chain release factor 2, found in Pseudarthrobacter chlorophenolicus (strain ATCC 700700 / DSM 12829 / CIP 107037 / JCM 12360 / KCTC 9906 / NCIMB 13794 / A6) (Arthrobacter chlorophenolicus).